We begin with the raw amino-acid sequence, 353 residues long: MDGFRIFTSDNYTEDDLGSGDYDSIKEPCFREENAHFNRIFLPTVYSIIFLTGIVGNGLVILVMGYQKKLRSMTDKYRLHLSVADLLFVLTLPFWAVDAVANWYFGKFLCKAVHVIYTVNLYSSVLILAFISLDRYLAIVHATNSQRPRKLLAEKVVYVGVWIPALLLTIPDFIFANVREGDGRYICDRFYPNDLWLVVFQFQHIMVGLILPGIVILSCYCIIISKLSHSKGYQKRKALKTTVILILAFFACWLPYYIGISIDSFILLEIIQQGCEFESTVHKWISITEALAFFHCCLNPILYAFLGAKFKTSAQHALTSVSRGSSLKILSKGKRGGHSSVSTESESSSFHSS.

Residues 1 to 22 (MDGFRIFTSDNYTEDDLGSGDY) form an important for chemokine binding and signaling region. Over 1–39 (MDGFRIFTSDNYTEDDLGSGDYDSIKEPCFREENAHFNR) the chain is Extracellular. N-linked (GlcNAc...) asparagine glycosylation occurs at Asn11. At Tyr12 the chain carries Sulfotyrosine. A glycan (O-linked (Xyl...) (chondroitin sulfate) serine) is linked at Ser19. Tyr22 carries the post-translational modification Sulfotyrosine. Disulfide bonds link Cys29-Cys275 and Cys110-Cys187. Residues 40–64 (IFLPTVYSIIFLTGIVGNGLVILVM) traverse the membrane as a helical segment. Over 65-78 (GYQKKLRSMTDKYR) the chain is Cytoplasmic. Residues 79–100 (LHLSVADLLFVLTLPFWAVDAV) traverse the membrane as a helical segment. A chemokine binding region spans residues 95-98 (WAVD). Over 101 to 111 (ANWYFGKFLCK) the chain is Extracellular. The helical transmembrane segment at 112–131 (AVHVIYTVNLYSSVLILAFI) threads the bilayer. Residues 114-118 (HVIYT) form a chemokine binding region. Over 132–155 (SLDRYLAIVHATNSQRPRKLLAEK) the chain is Cytoplasmic. The Important for signaling signature appears at 134 to 136 (DRY). The tract at residues 136 to 148 (YLAIVHATNSQRP) is involved in dimerization; when bound to chemokine. Residues 156–175 (VVYVGVWIPALLLTIPDFIF) form a helical membrane-spanning segment. Over 176 to 196 (ANVREGDGRYICDRFYPNDLW) the chain is Extracellular. Residues 187–191 (CDRFY) are chemokine binding, important for signaling. The involved in dimerization stretch occupies residues 192–211 (PNDLWLVVFQFQHIMVGLIL). A helical transmembrane segment spans residues 197 to 217 (LVVFQFQHIMVGLILPGIVIL). Over 218–242 (SCYCIIISKLSHSKGYQKRKALKTT) the chain is Cytoplasmic. The chain crosses the membrane as a helical span at residues 243 to 262 (VILILAFFACWLPYYIGISI). Residues 263–283 (DSFILLEIIQQGCEFESTVHK) are Extracellular-facing. Positions 267 to 269 (LLE) are involved in dimerization. The chain crosses the membrane as a helical span at residues 284–303 (WISITEALAFFHCCLNPILY). At 304 to 353 (AFLGAKFKTSAQHALTSVSRGSSLKILSKGKRGGHSSVSTESESSSFHSS) the chain is on the cytoplasmic side. Phosphoserine is present on residues Ser320 and Ser322. Residues Ser325 and Ser326 each carry the phosphoserine; by PKC and GRK6 modification. Residues 330 to 353 (LSKGKRGGHSSVSTESESSSFHSS) are disordered. Ser331 bears the Phosphoserine; by GRK6 mark. Residue Lys332 forms a Glycyl lysine isopeptide (Lys-Gly) (interchain with G-Cter in ubiquitin) linkage. Residues 338–353 (HSSVSTESESSSFHSS) are compositionally biased toward low complexity. Residue Ser340 is modified to Phosphoserine; by GRK6. Ser349 and Ser352 each carry phosphoserine.

Belongs to the G-protein coupled receptor 1 family. In terms of assembly, monomer. Can form homodimers. Interacts with CD164. Interacts with ARRB2; the interaction is dependent on the C-terminal phosphorylation of CXCR4 and allows activation of MAPK1 and MAPK3. Interacts with ARR3; the interaction is dependent on the C-terminal phosphorylation of CXCR4 and modulates calcium mobilization. Interacts with RNF113A; the interaction, enhanced by CXCL12, promotes CXCR4 ubiquitination and subsequent degradation. Interacts (via the cytoplasmic C-terminal) with ITCH (via the WW domains I and II); the interaction, enhanced by CXCL12, promotes CXCR4 ubiquitination and leads to its degradation. Interacts with extracellular ubiquitin. Interacts with DBN1; this interaction is enhanced by antigenic stimulation. Following LPS binding, may form a complex with GDF5, HSP90AA1 and HSPA8. Post-translationally, phosphorylated on agonist stimulation. Rapidly phosphorylated on serine and threonine residues in the C-terminal. Phosphorylation at Ser-325 and Ser-326 leads to recruitment of ITCH, ubiquitination and protein degradation. In terms of processing, ubiquitinated after ligand binding, leading to its degradation. Ubiquitinated by ITCH at the cell membrane on agonist stimulation. The ubiquitin-dependent mechanism, endosomal sorting complex required for transport (ESCRT), then targets CXCR4 for lysosomal degradation. This process is dependent also on prior Ser-/Thr-phosphorylation in the C-terminal of CXCR4. Also binding of ARRB1 to STAM negatively regulates CXCR4 sorting to lysosomes though modulating ubiquitination of SFR5S. Sulfation is required for efficient binding of CXCL12/SDF-1alpha and promotes its dimerization. Post-translationally, O- and N-glycosylated. N-glycosylation can mask coreceptor function. The O-glycosylation chondroitin sulfate attachment does not affect interaction with CXCL12/SDF-1alpha nor its coreceptor activity.

Its subcellular location is the cell membrane. It is found in the cell junction. The protein localises to the early endosome. The protein resides in the late endosome. It localises to the lysosome. Functionally, receptor for the C-X-C chemokine CXCL12/SDF-1 that transduces a signal by increasing intracellular calcium ion levels and enhancing MAPK1/MAPK3 activation. Involved in the AKT signaling cascade. Plays a role in regulation of cell migration, e.g. during wound healing. Acts as a receptor for extracellular ubiquitin; leading to enhanced intracellular calcium ions and reduced cellular cAMP levels. Binds bacterial lipopolysaccharide (LPS) et mediates LPS-induced inflammatory response, including TNF secretion by monocytes. Involved in hematopoiesis and in cardiac ventricular septum formation. Also plays an essential role in vascularization of the gastrointestinal tract, probably by regulating vascular branching and/or remodeling processes in endothelial cells. Involved in cerebellar development. In the CNS, could mediate hippocampal-neuron survival. The sequence is that of C-X-C chemokine receptor type 4 (CXCR4) from Sus scrofa (Pig).